The chain runs to 284 residues: 4-hydroxybenzoate octaprenyltransferase (284 aa).

9 helical membrane-spanning segments follow: residues 19-39, 42-62, 93-113, 114-134, 136-156, 161-181, 209-229, 235-252, and 264-284; these read IGTL…AKGM, FDVL…GCVI, IVLF…MNPL, TIKL…MKRF, HLPQ…AWAA, LPSI…AYDT, LMVG…GMHY, FYWA…QQHL, and AFLN…ITFW.

Belongs to the UbiA prenyltransferase family. Mg(2+) serves as cofactor.

The protein localises to the cell inner membrane. The enzyme catalyses all-trans-octaprenyl diphosphate + 4-hydroxybenzoate = 4-hydroxy-3-(all-trans-octaprenyl)benzoate + diphosphate. It participates in cofactor biosynthesis; ubiquinone biosynthesis. Functionally, catalyzes the prenylation of para-hydroxybenzoate (PHB) with an all-trans polyprenyl group. Mediates the second step in the final reaction sequence of ubiquinone-8 (UQ-8) biosynthesis, which is the condensation of the polyisoprenoid side chain with PHB, generating the first membrane-bound Q intermediate 3-octaprenyl-4-hydroxybenzoate. The polypeptide is 4-hydroxybenzoate octaprenyltransferase (Vibrio atlanticus (strain LGP32) (Vibrio splendidus (strain Mel32))).